A 184-amino-acid chain; its full sequence is Large ribosomal subunit protein uL15 (184 aa).

Residues 1 to 50 (MDLSSLRPAKGAVKNKKRVGRGQGSGNGTTAGKGNKGQQARSGYKRPINE) are disordered. The segment covering 21 to 35 (RGQGSGNGTTAGKGN) has biased composition (gly residues).

This sequence belongs to the universal ribosomal protein uL15 family. Part of the 50S ribosomal subunit.

Functionally, binds to the 23S rRNA. This is Large ribosomal subunit protein uL15 from Chlorobium luteolum (strain DSM 273 / BCRC 81028 / 2530) (Pelodictyon luteolum).